A 212-amino-acid polypeptide reads, in one-letter code: Ependymin (212 aa).

The N-terminal stretch at 1–20 is a signal peptide; that stretch reads MRLTGLLCVALWSASAVVLA. 3 N-linked (GlcNAc...) asparagine glycosylation sites follow: asparagine 69, asparagine 92, and asparagine 112.

It belongs to the ependymin family. In terms of assembly, forms disulfide-linked dimers. Post-translationally, binds calcium through the terminal sialic acids. In terms of tissue distribution, EPDs are synthesized in the meninx and secreted in the cerebrospinal fluid.

The protein localises to the secreted. In terms of biological role, may play a role in neural plasticity. May be involved during axon regeneration. This is Ependymin (epd) from Clupea harengus (Atlantic herring).